Reading from the N-terminus, the 126-residue chain is Large ribosomal subunit protein bL20 (126 aa).

The protein belongs to the bacterial ribosomal protein bL20 family.

Its function is as follows. Binds directly to 23S ribosomal RNA and is necessary for the in vitro assembly process of the 50S ribosomal subunit. It is not involved in the protein synthesizing functions of that subunit. The polypeptide is Large ribosomal subunit protein bL20 (Buchnera aphidicola subsp. Baizongia pistaciae (strain Bp)).